Here is a 455-residue protein sequence, read N- to C-terminus: Virion host shutoff protein (455 aa).

It belongs to the herpesviridae VHS protein family.

The protein resides in the virion. Functionally, minor structural protein that acts as an endoribonuclease during lytic infection. Degrades host mRNAs in the cytoplasm by cutting them at preferred sites, including some in regions of translation initiation. The sequence is that of Virion host shutoff protein (17) from Homo sapiens (Human).